We begin with the raw amino-acid sequence, 358 residues long: Insulin gene enhancer protein isl-2b (358 aa).

2 LIM zinc-binding domains span residues 27 to 80 (CVGC…CKRD) and 89 to 143 (CAKC…RADH). The homeobox DNA-binding region spans 191 to 250 (TTRVRTVLNEKQLHTLRTCYNANPRPDALMKEQLVEMTGLSPRVIRVWFQNKRCKDKKRS). Residues 325 to 335 (ESGSLGNSSGS) show a composition bias toward low complexity. Positions 325–358 (ESGSLGNSSGSDVTSLSSQLPDTPNSMVPSPVET) are disordered. Over residues 336-358 (DVTSLSSQLPDTPNSMVPSPVET) the composition is skewed to polar residues.

Its subcellular location is the nucleus. In terms of biological role, binds to one of the cis-acting domain of the insulin gene enhancer. May be involved in the regional specification of the myotome and also in target recognition by the caudal primary neuron. The sequence is that of Insulin gene enhancer protein isl-2b (isl2b) from Danio rerio (Zebrafish).